A 497-amino-acid polypeptide reads, in one-letter code: DNA-dependent metalloprotease SPRTN (497 aa).

M1 is subject to N-acetylmethionine. Residues 46 to 213 enclose the SprT-like domain; it reads LQALFLQFND…KTCGGTYIKI (168 aa). Zn(2+) is bound at residue H112. E113 is a catalytic residue. Residues H116 and H131 each contribute to the Zn(2+) site. K231 is modified (N6-acetyllysine). The SHP-box motif lies at 254-262; it reads FSGKGYVLG. S269 carries the phosphoserine modification. A Glycyl lysine isopeptide (Lys-Gly) (interchain with G-Cter in SUMO2) cross-link involves residue K304. The PIP-box motif lies at 326-333; that stretch reads QSVLSSYF. K342 is covalently cross-linked (Glycyl lysine isopeptide (Lys-Gly) (interchain with G-Cter in SUMO2); alternate). A Glycyl lysine isopeptide (Lys-Gly) (interchain with G-Cter in ubiquitin); alternate cross-link involves residue K342. The disordered stretch occupies residues 344–459; the sequence is FRNVNGSPVK…ASAPQSLSSQ (116 aa). Residues 347-356 are compositionally biased toward polar residues; that stretch reads VNGSPVKNGT. K362 participates in a covalent cross-link: Glycyl lysine isopeptide (Lys-Gly) (interchain with G-Cter in SUMO2). A compositionally biased stretch (low complexity) spans 383-404; sequence TSKVTAPASATVTSAAGTSATI. S384 is subject to Phosphoserine. The Nuclear localization signal signature appears at 413-424; that stretch reads DQFLNKRPRLED. Residues 420–432 are compositionally biased toward basic and acidic residues; sequence PRLEDRTALDTIK. K432 is covalently cross-linked (Glycyl lysine isopeptide (Lys-Gly) (interchain with G-Cter in SUMO2)). Over residues 442–459 the composition is skewed to low complexity; that stretch reads RSSSQPTAASAPQSLSSQ. Residues 462-489 form a UBZ4-type zinc finger; it reads LVNCPVCQGVVVESQINEHLDRCLEGNK. Zn(2+) is bound by residues C465, C468, H480, and C484.

The protein belongs to the Spartan family. As to quaternary structure, homodimer. Interacts (VIA PIP-box) with PCNA (when ubiquitinated). Interacts (via its SHP-box) with VCP/p97. Interacts with RAD18. Interacts with KCTD13 and POLD3. Zn(2+) serves as cofactor. In terms of processing, autocatalytically cleaved in response to double-stranded DNA-binding: autocatalytic cleavage takes place in trans and leads to inactivation. Monoubiquitinated; monoubiquitination promotes exclusion from chromatin. Deubiquitinated by VCPIP1: deubiquitination is required for subsequent acetylation and recruitment to chromatin and DNA damage sites. Post-translationally, acetylated following deubiquitination by VCPIP1, leading to recruitment to chromatin and DNA damage sites. In terms of processing, phosphorylation by CHEK1 promotes recruitment to chromatin.

Its subcellular location is the nucleus. The protein resides in the chromosome. DNA-binding activates the protease activity: single-stranded DNA-binding specifically activates ability to cleave covalent DNA-protein cross-links (DPCs). In contrast, double-stranded DNA-binding specifically activates autocatalytic cleavage, and subsequent inactivation. In terms of biological role, DNA-dependent metalloendopeptidase that mediates the proteolytic cleavage of covalent DNA-protein cross-links (DPCs) during DNA synthesis, thereby playing a key role in maintaining genomic integrity. DPCs are highly toxic DNA lesions that interfere with essential chromatin transactions, such as replication and transcription, and which are induced by reactive agents, such as UV light or formaldehyde. Associates with the DNA replication machinery and specifically removes DPCs during DNA synthesis. Catalyzes proteolytic cleavage of the HMCES DNA-protein cross-link following unfolding by the BRIP1/FANCJ helicase. Acts as a pleiotropic protease for DNA-binding proteins cross-linked with DNA, such as TOP1, TOP2A, histones H3 and H4. Mediates degradation of DPCs that are not ubiquitinated, while it is not able to degrade ubiquitinated DPCs. SPRTN activation requires polymerase collision with DPCs followed by helicase bypass of DPCs. Involved in recruitment of VCP/p97 to sites of DNA damage. Also acts as an activator of CHEK1 during normal DNA replication by mediating proteolytic cleavage of CHEK1, thereby promoting CHEK1 removal from chromatin and subsequent activation. Does not activate CHEK1 in response to DNA damage. May also act as a 'reader' of ubiquitinated PCNA: recruited to sites of UV damage and interacts with ubiquitinated PCNA and RAD18, the E3 ubiquitin ligase that monoubiquitinates PCNA. Facilitates chromatin association of RAD18 and is required for efficient PCNA monoubiquitination, promoting a feed-forward loop to enhance PCNA ubiquitination and translesion DNA synthesis. In Mus musculus (Mouse), this protein is DNA-dependent metalloprotease SPRTN.